Here is a 396-residue protein sequence, read N- to C-terminus: Flavohemoprotein (396 aa).

Residues 1-136 (MLDTQTIAIV…LADVFIQRES (136 aa)) form the Globin domain. Residue His-85 coordinates heme b. Residues Tyr-95 and Glu-135 each act as charge relay system in the active site. Residues 147-396 (GGWRTLRRFR…YECFGPHKVI (250 aa)) are reductase. Positions 150-255 (RTLRRFRIIK…APPRGDFFLD (106 aa)) constitute an FAD-binding FR-type domain. FAD is bound by residues Tyr-188 and 204–207 (RQYS). 268–273 (GVGQTP) is an NADP(+) binding site. Residue 389-392 (CFGP) coordinates FAD.

The protein belongs to the globin family. Two-domain flavohemoproteins subfamily. It in the C-terminal section; belongs to the flavoprotein pyridine nucleotide cytochrome reductase family. It depends on heme b as a cofactor. FAD serves as cofactor.

It catalyses the reaction 2 nitric oxide + NADPH + 2 O2 = 2 nitrate + NADP(+) + H(+). It carries out the reaction 2 nitric oxide + NADH + 2 O2 = 2 nitrate + NAD(+) + H(+). Is involved in NO detoxification in an aerobic process, termed nitric oxide dioxygenase (NOD) reaction that utilizes O(2) and NAD(P)H to convert NO to nitrate, which protects the bacterium from various noxious nitrogen compounds. Therefore, plays a central role in the inducible response to nitrosative stress. The protein is Flavohemoprotein of Yersinia pestis.